Consider the following 99-residue polypeptide: U1-theraphotoxin-Tal1a (99 aa).

The N-terminal stretch at 1-22 (MNTIQVIIFAVVLVLTVTVGQA) is a signal peptide. Positions 23–57 (DEDSAETSLLRKLKEAEASLFGQHLEESQHSREKR) are excised as a propeptide. 3 cysteine pairs are disulfide-bonded: cysteine 58/cysteine 73, cysteine 65/cysteine 78, and cysteine 72/cysteine 93. A Serine amide modification is found at serine 98.

It belongs to the neurotoxin 14 (magi-1) family. 08 (Ltx-4) subfamily. As to expression, expressed by the venom gland.

Its subcellular location is the secreted. Functionally, insecticidal toxin that shows strong lethal effects on American cockroaches (P.americana) and common mealbeetle (T.molitor). Possibly acts by blocking ion channel currents. Also shows significant analgesic effects in mice models of pain including abdominal writhing induced by acetic acid and formalin-induced paw licking tests. In addition, exerts marked inhibition of proliferation of some human tumor cell lines including C8166, Molt-4, A-549, BIU-87, T24, and Calu-6. This chain is U1-theraphotoxin-Tal1a, found in Tliltocatl albopilosus (Curlyhair tarantula).